A 373-amino-acid polypeptide reads, in one-letter code: Queuine tRNA-ribosyltransferase accessory subunit 2 (373 aa).

Positions 320, 322, 325, and 351 each coordinate Zn(2+).

Belongs to the queuine tRNA-ribosyltransferase family. QTRT2 subfamily. Heterodimer of a catalytic subunit and an accessory subunit. It depends on Zn(2+) as a cofactor.

It is found in the cytoplasm. Its function is as follows. Non-catalytic subunit of the queuine tRNA-ribosyltransferase (TGT) that catalyzes the base-exchange of a guanine (G) residue with queuine (Q) at position 34 (anticodon wobble position) in tRNAs with GU(N) anticodons (tRNA-Asp, -Asn, -His and -Tyr), resulting in the hypermodified nucleoside queuosine (7-(((4,5-cis-dihydroxy-2-cyclopenten-1-yl)amino)methyl)-7-deazaguanosine). This chain is Queuine tRNA-ribosyltransferase accessory subunit 2, found in Caenorhabditis elegans.